Reading from the N-terminus, the 699-residue chain is NAD(P)H-quinone oxidoreductase subunit 5, chloroplastic (699 aa).

A run of 15 helical transmembrane segments spans residues 1–21 (WIIP…LLLF), 32–52 (WAFP…NLSI), 81–101 (IDPL…TVLI), 117–137 (FAYM…SNLI), 139–159 (IYIF…FWFT), 177–197 (GDFG…SFEF), 216–236 (LFVT…SAQF), 250–270 (TPIS…FLVA), 272–292 (LLPL…IGII), 319–339 (LGYM…FHLI), 346–366 (ALLF…VGYS), 388–408 (ISFL…CFWS), 417–437 (WLYS…TAFY), 539–559 (LFPL…GISF), and 598–618 (IFSV…YKPI).

This sequence belongs to the complex I subunit 5 family. NDH is composed of at least 16 different subunits, 5 of which are encoded in the nucleus.

The protein resides in the plastid. The protein localises to the chloroplast thylakoid membrane. It carries out the reaction a plastoquinone + NADH + (n+1) H(+)(in) = a plastoquinol + NAD(+) + n H(+)(out). The catalysed reaction is a plastoquinone + NADPH + (n+1) H(+)(in) = a plastoquinol + NADP(+) + n H(+)(out). Its function is as follows. NDH shuttles electrons from NAD(P)H:plastoquinone, via FMN and iron-sulfur (Fe-S) centers, to quinones in the photosynthetic chain and possibly in a chloroplast respiratory chain. The immediate electron acceptor for the enzyme in this species is believed to be plastoquinone. Couples the redox reaction to proton translocation, and thus conserves the redox energy in a proton gradient. This chain is NAD(P)H-quinone oxidoreductase subunit 5, chloroplastic (ndhF), found in Digitalis grandiflora (Yellow foxglove).